The primary structure comprises 1144 residues: ATP-dependent helicase/deoxyribonuclease subunit B (1144 aa).

Residues 1 to 276 (MAIRYVFGRA…IDLDRNERPV (276 aa)) enclose the UvrD-like helicase ATP-binding domain. ATP is bound at residue 8–15 (GRAGRGKS). Residues 274–584 (RPVLPKVQEI…LVGSIERSKS (311 aa)) form the UvrD-like helicase C-terminal domain. [4Fe-4S] cluster-binding residues include Cys784, Cys1102, Cys1105, and Cys1111.

This sequence belongs to the helicase family. AddB/RexB type 1 subfamily. As to quaternary structure, heterodimer of AddA and AddB. Mg(2+) serves as cofactor. [4Fe-4S] cluster is required as a cofactor.

Functionally, the heterodimer acts as both an ATP-dependent DNA helicase and an ATP-dependent, dual-direction single-stranded exonuclease. Recognizes the chi site generating a DNA molecule suitable for the initiation of homologous recombination. The AddB subunit has 5' -&gt; 3' nuclease activity but not helicase activity. The protein is ATP-dependent helicase/deoxyribonuclease subunit B of Alkaliphilus oremlandii (strain OhILAs) (Clostridium oremlandii (strain OhILAs)).